The chain runs to 404 residues: Lysophospholipid transporter LplT (404 aa).

A run of 12 helical transmembrane segments spans residues 16-36 (MIAV…LLFA), 53-73 (ILQM…GQFA), 91-111 (AGAL…LVGV), 139-159 (MMEA…GVLA), 164-184 (GVAL…NMFI), 195-213 (SWRP…LVLW), 227-247 (LFWG…PIAL), 253-273 (ATPT…AGAA), 285-305 (CLPA…QHSM), 310-330 (LLLI…NALL), 350-370 (GENT…KLGV), and 372-392 (VIAV…LLWG).

It belongs to the major facilitator superfamily. LplT (TC 2.A.1.42) family.

It is found in the cell inner membrane. Functionally, catalyzes the facilitated diffusion of 2-acyl-glycero-3-phosphoethanolamine (2-acyl-GPE) into the cell. This Yersinia enterocolitica serotype O:8 / biotype 1B (strain NCTC 13174 / 8081) protein is Lysophospholipid transporter LplT.